Reading from the N-terminus, the 205-residue chain is FMN reductase (NADH) RutF (205 aa).

The interval Pro-171–Ala-205 is disordered.

It belongs to the non-flavoprotein flavin reductase family. RutF subfamily.

It catalyses the reaction FMNH2 + NAD(+) = FMN + NADH + 2 H(+). Catalyzes the reduction of FMN to FMNH2 which is used to reduce pyrimidine by RutA via the Rut pathway. The chain is FMN reductase (NADH) RutF from Methylorubrum extorquens (strain DSM 6343 / CIP 106787 / DM4) (Methylobacterium extorquens).